A 3391-amino-acid polypeptide reads, in one-letter code: Genome polyprotein (3391 aa).

Residues 1–15 form an interaction with host EXOC1 region; it reads MNNQRKKAKNTPFNM. Over 1 to 101 the chain is Cytoplasmic; it reads MNNQRKKAKN…LNILNRRRRS (101 aa). The segment at 37-72 is hydrophobic; homodimerization of capsid protein C; it reads MLQGRGPLKLFMALVAFLRFLTIPPTAGILKRWGTI. The propeptide at 101 to 114 is ER anchor for the capsid protein C, removed in mature form by serine protease NS3; sequence SAGMIIMLIPTVMA. Residues 102 to 122 form a helical membrane-spanning segment; it reads AGMIIMLIPTVMAFHLTTRNG. Residues 123 to 238 lie on the Extracellular side of the membrane; sequence EPHMIVSRQE…GAWKHAQRIE (116 aa). Residue Asn-183 is glycosylated (N-linked (GlcNAc...) asparagine; by host). The chain crosses the membrane as a helical span at residues 239–259; sequence TWILRHPGFTIMAAILAYTIG. Topologically, residues 260-265 are cytoplasmic; sequence TTHFQR. The chain crosses the membrane as a helical span at residues 266–280; the sequence is ALIFILLTAVAPSMT. Residues 281–725 are Extracellular-facing; the sequence is MRCIGISNRD…LHQVFGAIYG (445 aa). 4 cysteine pairs are disulfide-bonded: Cys-283/Cys-310, Cys-340/Cys-401, Cys-354/Cys-385, and Cys-372/Cys-396. A glycan (N-linked (GlcNAc...) asparagine; by host) is linked at Asn-347. A fusion peptide region spans residues 378-391; it reads DRGWGNGCGLFGKG. N-linked (GlcNAc...) asparagine; by host glycosylation is present at Asn-433. 2 cysteine pairs are disulfide-bonded: Cys-465–Cys-565 and Cys-582–Cys-613. Residues 726 to 746 form a helical membrane-spanning segment; it reads AAFSGVSWTMKILIGVIITWI. At 747-752 the chain is on the cytoplasmic side; that stretch reads GMNSRS. The chain crosses the membrane as a helical span at residues 753–773; the sequence is TSLSVSLVLVGIVTLYLGVMV. Topologically, residues 774–1195 are extracellular; the sequence is QADSGCVVSW…MVGATMTDDI (422 aa). 6 disulfide bridges follow: Cys-779/Cys-790, Cys-830/Cys-918, Cys-954/Cys-998, Cys-1055/Cys-1104, Cys-1066/Cys-1088, and Cys-1087/Cys-1091. N-linked (GlcNAc...) asparagine; by host glycans are attached at residues Asn-905 and Asn-982. Asn-1134 carries N-linked (GlcNAc...) asparagine; by host glycosylation. The helical transmembrane segment at 1196-1220 threads the bilayer; the sequence is GMGVTYLALLAAFKVRPTFAAGLLL. The Cytoplasmic portion of the chain corresponds to 1221-1226; the sequence is RKLTSK. The helical transmembrane segment at 1227-1245 threads the bilayer; that stretch reads ELMMTTIGIVLLSQSTIPE. Topologically, residues 1246 to 1269 are lumenal; that stretch reads TILELTDALALGMMVLKMVRNMEK. The helical transmembrane segment at 1270-1290 threads the bilayer; sequence YQLAVTIMAILCVPNAVILQN. A topological domain (cytoplasmic) is located at residue Ala-1291. Residues 1292–1310 form a helical membrane-spanning segment; it reads WKVSCTILAVVSVSPLLLT. Topologically, residues 1311-1317 are lumenal; it reads SSQQKTD. A helical membrane pass occupies residues 1318–1338; sequence WIPLALTIKGLNPTAIFLTTL. At 1339–1346 the chain is on the cytoplasmic side; the sequence is SRTSKKRS. Residues 1347 to 1367 form a helical membrane-spanning segment; sequence WPLNEAIMAVGMVSILASSLL. At 1368 to 1370 the chain is on the lumenal side; the sequence is KND. The helical transmembrane segment at 1371–1391 threads the bilayer; that stretch reads IPMTGPLVAGGLLTVCYVLTG. Topologically, residues 1392–1447 are cytoplasmic; that stretch reads RSADLELERAADVKWEDQAEISGSSPILSITISEDGSMSIKNEEEEQTLTILIRTG. The tract at residues 1398–1437 is interacts with and activates NS3 protease; it reads LERAADVKWEDQAEISGSSPILSITISEDGSMSIKNEEEE. Residues 1448 to 1468 constitute an intramembrane region (helical); it reads LLVISGLFPVSIPITAAAWYL. At 1469–2147 the chain is on the cytoplasmic side; it reads WEVKKQRAGV…LSELPETLET (679 aa). A Peptidase S7 domain is found at 1476-1653; the sequence is AGVLWDVPSP…EKSIEDNPEI (178 aa). Catalysis depends on charge relay system; for serine protease NS3 activity residues His-1526, Asp-1550, and Ser-1610. Residues 1655–1811 form the Helicase ATP-binding domain; sequence DDIFRKRRLT…QSNAPIIDEE (157 aa). An important for RNA-binding region spans residues 1659–1662; sequence RKRR. ATP is bound at residue 1668 to 1675; the sequence is LHPGAGKT. A DEAH box motif is present at residues 1759–1762; that stretch reads DEAH. The Helicase C-terminal domain occupies 1821–1988; that stretch reads SGHEWVTDFK…IIPSMFEPER (168 aa). An N6-acetyllysine; by host modification is found at Lys-1863. The chain crosses the membrane as a helical span at residues 2148–2168; it reads LLLLTLLATVTGGIFLFLMSG. Over 2169–2170 the chain is Lumenal; sequence RG. Positions 2171-2191 form an intramembrane region, helical; it reads IGKMTLGMCCIITASVLLWYA. Gln-2192 is a topological domain (lumenal). The helical transmembrane segment at 2193–2213 threads the bilayer; the sequence is IQPHWIAASIILEFFLIVLLI. Over 2214 to 2228 the chain is Cytoplasmic; it reads PEPEKQRTPQDNQLT. Residues 2229–2249 form a helical membrane-spanning segment; that stretch reads YVVIAILTVVAATMANEMGFL. Topologically, residues 2250 to 2274 are lumenal; the sequence is EKTKKDLGLGSIATQQPESNILDID. Residues 2275–2295 constitute an intramembrane region (helical); that stretch reads LRPASAWTLYAVATTFVTPML. At 2296–2316 the chain is on the lumenal side; that stretch reads RHSIENSSVNVSLTAIANQAT. N-linked (GlcNAc...) asparagine; by host glycans are attached at residues Asn-2301 and Asn-2305. An intramembrane region (helical) is located at residues 2317 to 2337; that stretch reads VLMGLGKGWPLSKMDIGVPLL. At 2338–2347 the chain is on the lumenal side; sequence AIGCYSQVNP. The helical transmembrane segment at 2348–2368 threads the bilayer; that stretch reads ITLTAALLLLVAHYAIIGPGL. Residues 2369 to 2413 are Cytoplasmic-facing; that stretch reads QAKATREAQKRAAAGIMKNPTVDGITVIDLDPIPYDPKFEKQLGQ. A helical membrane pass occupies residues 2414–2434; sequence VMLLVLCVTQVLMMRTTWALC. The Lumenal segment spans residues 2435–2459; that stretch reads EALTLATGPISTLWEGNPGRFWNTT. The N-linked (GlcNAc...) asparagine; by host glycan is linked to Asn-2457. A helical membrane pass occupies residues 2460 to 2480; the sequence is IAVSMANIFRGSYLAGAGLLF. Topologically, residues 2481–3391 are cytoplasmic; it reads SIMKNTTNTR…REEEEAGVLW (911 aa). The region spanning 2493–2755 is the mRNA cap 0-1 NS5-type MT domain; that stretch reads TGNIGETLGE…DVDLGSGTRN (263 aa). Ser-2547 provides a ligand contact to S-adenosyl-L-methionine. A Phosphoserine modification is found at Ser-2547. Catalysis depends on Lys-2552, which acts as the For 2'-O-MTase activity. The short motif at 2568–2571 is the SUMO-interacting motif element; that stretch reads VVDL. Residues Gly-2577, Trp-2578, Thr-2595, Lys-2596, Asp-2622, and Val-2623 each coordinate S-adenosyl-L-methionine. Asp-2637 serves as the catalytic For 2'-O-MTase activity. Ile-2638 serves as a coordination point for S-adenosyl-L-methionine. Active-site for 2'-O-MTase activity residues include Lys-2672 and Glu-2708. Tyr-2710 is a binding site for S-adenosyl-L-methionine. Zn(2+)-binding residues include Glu-2929, His-2933, Cys-2938, and Cys-2941. The RdRp catalytic domain occupies 3020-3169; it reads AMYADDTAGW…PLDDRFASAL (150 aa). The Zn(2+) site is built by His-3203, Cys-3219, and Cys-3338.

It in the N-terminal section; belongs to the class I-like SAM-binding methyltransferase superfamily. mRNA cap 0-1 NS5-type methyltransferase family. Homodimer. Interacts (via N-terminus) with host EXOC1 (via C-terminus); this interaction results in EXOC1 degradation through the proteasome degradation pathway. As to quaternary structure, forms heterodimers with envelope protein E in the endoplasmic reticulum and Golgi. In terms of assembly, homodimer; in the endoplasmic reticulum and Golgi. Interacts with protein prM. Interacts with non-structural protein 1. Homodimer; Homohexamer when secreted. Interacts with envelope protein E. Interacts with host PRKAA1. As to quaternary structure, interacts (via N-terminus) with serine protease NS3. In terms of assembly, forms a heterodimer with serine protease NS3. May form homooligomers. Forms a heterodimer with NS2B. Interacts with NS4B. Interacts with unphosphorylated RNA-directed RNA polymerase NS5; this interaction stimulates RNA-directed RNA polymerase NS5 guanylyltransferase activity. Interacts with host SHFL. As to quaternary structure, interacts with host MAVS; this interaction inhibits the synthesis of IFN-beta. Interacts with host SHFL. Interacts with host AUP1; the interaction occurs in the presence of Dengue virus NS4B and induces lipophagy which facilitates production of virus progeny particles. May interact with host SRPRA and SEC61G. In terms of assembly, interacts with serine protease NS3. Homodimer. Interacts with host STAT2; this interaction inhibits the phosphorylation of the latter, and, when all viral proteins are present (polyprotein), targets STAT2 for degradation. Interacts with serine protease NS3. Interacts with host PAF1 complex; the interaction may prevent the recruitment of the PAF1 complex to interferon-responsive genes, and thus reduces the immune response. Post-translationally, specific enzymatic cleavages in vivo yield mature proteins. Cleavages in the lumen of endoplasmic reticulum are performed by host signal peptidase, whereas cleavages in the cytoplasmic side are performed by serine protease NS3. Signal cleavage at the 2K-4B site requires a prior NS3 protease-mediated cleavage at the 4A-2K site. In terms of processing, cleaved in post-Golgi vesicles by a host furin, releasing the mature small envelope protein M, and peptide pr. This cleavage is incomplete as up to 30% of viral particles still carry uncleaved prM. N-glycosylated. Post-translationally, N-glycosylated. The excreted form is glycosylated and this is required for efficient secretion of the protein from infected cells. In terms of processing, acetylated by host KAT5. Acetylation modulates NS3 RNA-binding and unwinding activities and plays an important positive role for viral replication. Phosphorylated on serines residues. This phosphorylation may trigger NS5 nuclear localization. Post-translationally, sumoylation of RNA-directed RNA polymerase NS5 increases NS5 protein stability allowing proper viral RNA replication.

It is found in the virion. Its subcellular location is the host nucleus. The protein localises to the host cytoplasm. The protein resides in the host perinuclear region. It localises to the secreted. It is found in the virion membrane. Its subcellular location is the host endoplasmic reticulum membrane. The protein localises to the host mitochondrion. It carries out the reaction Selective hydrolysis of -Xaa-Xaa-|-Yaa- bonds in which each of the Xaa can be either Arg or Lys and Yaa can be either Ser or Ala.. The catalysed reaction is RNA(n) + a ribonucleoside 5'-triphosphate = RNA(n+1) + diphosphate. It catalyses the reaction a ribonucleoside 5'-triphosphate + H2O = a ribonucleoside 5'-diphosphate + phosphate + H(+). The enzyme catalyses ATP + H2O = ADP + phosphate + H(+). It carries out the reaction a 5'-end (5'-triphosphoguanosine)-ribonucleoside in mRNA + S-adenosyl-L-methionine = a 5'-end (N(7)-methyl 5'-triphosphoguanosine)-ribonucleoside in mRNA + S-adenosyl-L-homocysteine. The catalysed reaction is a 5'-end (N(7)-methyl 5'-triphosphoguanosine)-ribonucleoside in mRNA + S-adenosyl-L-methionine = a 5'-end (N(7)-methyl 5'-triphosphoguanosine)-(2'-O-methyl-ribonucleoside) in mRNA + S-adenosyl-L-homocysteine + H(+). Functionally, plays a role in virus budding by binding to the cell membrane and gathering the viral RNA into a nucleocapsid that forms the core of a mature virus particle. During virus entry, may induce genome penetration into the host cytoplasm after hemifusion induced by the surface proteins. Can migrate to the cell nucleus where it modulates host functions. Overcomes the anti-viral effects of host EXOC1 by sequestering and degrading the latter through the proteasome degradation pathway. Its function is as follows. Inhibits RNA silencing by interfering with host Dicer. In terms of biological role, prevents premature fusion activity of envelope proteins in trans-Golgi by binding to envelope protein E at pH6.0. After virion release in extracellular space, gets dissociated from E dimers. Acts as a chaperone for envelope protein E during intracellular virion assembly by masking and inactivating envelope protein E fusion peptide. prM is the only viral peptide matured by host furin in the trans-Golgi network probably to avoid catastrophic activation of the viral fusion activity in acidic Golgi compartment prior to virion release. prM-E cleavage is inefficient, and many virions are only partially matured. These uncleaved prM would play a role in immune evasion. Functionally, may play a role in virus budding. Exerts cytotoxic effects by activating a mitochondrial apoptotic pathway through M ectodomain. May display a viroporin activity. Its function is as follows. Binds to host cell surface receptor and mediates fusion between viral and cellular membranes. Envelope protein is synthesized in the endoplasmic reticulum in the form of heterodimer with protein prM. They play a role in virion budding in the ER, and the newly formed immature particle is covered with 60 spikes composed of heterodimer between precursor prM and envelope protein E. The virion is transported to the Golgi apparatus where the low pH causes dissociation of PrM-E heterodimers and formation of E homodimers. prM-E cleavage is inefficient, and many virions are only partially matured. These uncleaved prM would play a role in immune evasion. In terms of biological role, involved in immune evasion, pathogenesis and viral replication. Once cleaved off the polyprotein, is targeted to three destinations: the viral replication cycle, the plasma membrane and the extracellular compartment. Essential for viral replication. Required for formation of the replication complex and recruitment of other non-structural proteins to the ER-derived membrane structures. Excreted as a hexameric lipoparticle that plays a role against host immune response. Antagonizing the complement function. Binds to the host macrophages and dendritic cells. Inhibits signal transduction originating from Toll-like receptor 3 (TLR3). Mediates complement activation, which may contribute to the pathogenesis of the vascular leakage that occurs in severe dengue disease. Activates autophagy through the AMPK/ERK/mTOR signaling pathway. Mechanistically, acts as the assembly platform for STK11-AMPK interactions and promotes STK11-AMPK interactions. In turn, promotes phosphorylation of the AMPK kinase structural domain and activates AMPK, thereby positively regulating the AMPK/ERK/mTOR signaling pathway and inducing autophagy. Disrupts the host endothelial glycocalyx layer of host pulmonary microvascular endothelial cells, inducing degradation of sialic acid and shedding of heparan sulfate proteoglycans. NS1 induces expression of sialidases, heparanase, and activates cathepsin L, which activates heparanase via enzymatic cleavage. These effects are probably linked to the endothelial hyperpermeability observed in severe dengue disease. Functionally, component of the viral RNA replication complex that functions in virion assembly and antagonizes the host immune response. Its function is as follows. Required cofactor for the serine protease function of NS3. May have membrane-destabilizing activity and form viroporins. In terms of biological role, displays three enzymatic activities: serine protease, NTPase and RNA helicase. NS3 serine protease, in association with NS2B, performs its autocleavage and cleaves the polyprotein at dibasic sites in the cytoplasm: C-prM, NS2A-NS2B, NS2B-NS3, NS3-NS4A, NS4A-2K and NS4B-NS5. NS3 RNA helicase binds RNA and unwinds dsRNA in the 3' to 5' direction. Regulates the ATPase activity of the NS3 helicase activity. NS4A allows NS3 helicase to conserve energy during unwinding. Plays a role in the inhibition of the host innate immune response. Interacts with host MAVS and thereby prevents the interaction between RIGI and MAVS. In turn, IFN-beta production is impaired. Interacts with host AUP1 which mediates induction of lipophagy in host cells and facilitates production of virus progeny particles. Functionally, functions as a signal peptide for NS4B and is required for the interferon antagonism activity of the latter. Its function is as follows. Induces the formation of ER-derived membrane vesicles where the viral replication takes place. Inhibits interferon (IFN)-induced host STAT1 phosphorylation and nuclear translocation, thereby preventing the establishment of cellular antiviral state by blocking the IFN-alpha/beta pathway. In terms of biological role, replicates the viral (+) and (-) RNA genome, and performs the capping of genomes in the cytoplasm. NS5 methylates viral RNA cap at guanine N-7 and ribose 2'-O positions. Besides its role in RNA genome replication, also prevents the establishment of cellular antiviral state by blocking the interferon-alpha/beta (IFN-alpha/beta) signaling pathway. Inhibits host TYK2 and STAT2 phosphorylation, thereby preventing activation of JAK-STAT signaling pathway. May reduce immune responses by preventing the recruitment of the host PAF1 complex to interferon-responsive genes. The sequence is that of Genome polyprotein from Aedimorphus (Red guenon).